The following is a 440-amino-acid chain: Calcium/calmodulin-regulated receptor-like kinase 1 (440 aa).

The helical transmembrane segment at 8–28 (LIVGISLGLVIGVVLAISALF) threads the bilayer. The calmodulin binding stretch occupies residues 28–228 (FCFRYHRKKS…ARGLEYLHDG (201 aa)). Residues 113 to 380 (CNFTTLIGQG…DIVQVLTRVI (268 aa)) form the Protein kinase domain. ATP-binding positions include 119–127 (IGQGAFGPV) and lysine 141. The residue at position 186 (tyrosine 186) is a Phosphotyrosine. Residue aspartate 237 is the Proton acceptor of the active site. Serine 241 carries the post-translational modification Phosphoserine. Phosphothreonine is present on threonine 274. Position 282 is a phosphotyrosine (tyrosine 282). A calmodulin binding region spans residues 369–440 (MRDIVQVLTR…DSSIAEDVIL (72 aa)). The segment at 386-427 (RKRQKNSPSPSPRLPPPPPIVEESEGELTANGSLRSEIHRRD) is disordered. The segment covering 394–405 (SPSPRLPPPPPI) has biased composition (pro residues).

It belongs to the protein kinase superfamily. Ser/Thr protein kinase family. In terms of assembly, interacts with calmodulin (CaM) in a calcium- (Ca(2+)-) dependent manner. Binds to MEKK1. In terms of tissue distribution, similar transcript expression levels in seedlings, roots, leaves, stems and flowers, and lower levels in siliques, but protein accumulates mostly in 7-day-old seedlings, old roots and young leaves and, to a lower extent, in young roots, old leaves, flowers and siliques (at protein level).

It is found in the cell membrane. The protein localises to the endosome membrane. The catalysed reaction is L-seryl-[protein] + ATP = O-phospho-L-seryl-[protein] + ADP + H(+). It catalyses the reaction L-threonyl-[protein] + ATP = O-phospho-L-threonyl-[protein] + ADP + H(+). Its activity is regulated as follows. Kinase activity is stimulated by calcium/calmodulin, but blocked by chlorpromazine. In terms of biological role, required for cold tolerance, via the activation of MAP kinases activity. Phosphorylates and activates MEKK1 in response to cold in a calcium-dependent manner. In Arabidopsis thaliana (Mouse-ear cress), this protein is Calcium/calmodulin-regulated receptor-like kinase 1.